Here is a 321-residue protein sequence, read N- to C-terminus: D-alanine--D-alanine ligase (321 aa).

An ATP-grasp domain is found at 103 to 303 (KKILTPENIP…YVALCRMIVE (201 aa)). 129–186 (PLPRPYVLKPVNEGSSVGVAIIDESFNDGQPIRKDQIDPWKNFKTLLAEPFIKGRELT) lines the ATP pocket. The Mg(2+) site is built by Asp254, Glu270, and Asn272.

It belongs to the D-alanine--D-alanine ligase family. It depends on Mg(2+) as a cofactor. Mn(2+) is required as a cofactor.

It localises to the cytoplasm. It carries out the reaction 2 D-alanine + ATP = D-alanyl-D-alanine + ADP + phosphate + H(+). It functions in the pathway cell wall biogenesis; peptidoglycan biosynthesis. In terms of biological role, cell wall formation. In Zymomonas mobilis subsp. mobilis (strain ATCC 31821 / ZM4 / CP4), this protein is D-alanine--D-alanine ligase.